A 394-amino-acid chain; its full sequence is Queuine tRNA-ribosyltransferase (394 aa).

D95 (proton acceptor) is an active-site residue. Residues 95–99 (DSGGF), D149, Q190, and G217 contribute to the substrate site. An RNA binding region spans residues 248–254 (GVGTPID). D267 functions as the Nucleophile in the catalytic mechanism. The interval 272–276 (TRNAR) is RNA binding; important for wobble base 34 recognition. Zn(2+) contacts are provided by C305, C307, C310, and H337. Residues 375–394 (NDANETVGATESTESTESTE) form a disordered region.

It belongs to the queuine tRNA-ribosyltransferase family. In terms of assembly, homodimer. Within each dimer, one monomer is responsible for RNA recognition and catalysis, while the other monomer binds to the replacement base PreQ1. Requires Zn(2+) as cofactor.

It catalyses the reaction 7-aminomethyl-7-carbaguanine + guanosine(34) in tRNA = 7-aminomethyl-7-carbaguanosine(34) in tRNA + guanine. It functions in the pathway tRNA modification; tRNA-queuosine biosynthesis. Catalyzes the base-exchange of a guanine (G) residue with the queuine precursor 7-aminomethyl-7-deazaguanine (PreQ1) at position 34 (anticodon wobble position) in tRNAs with GU(N) anticodons (tRNA-Asp, -Asn, -His and -Tyr). Catalysis occurs through a double-displacement mechanism. The nucleophile active site attacks the C1' of nucleotide 34 to detach the guanine base from the RNA, forming a covalent enzyme-RNA intermediate. The proton acceptor active site deprotonates the incoming PreQ1, allowing a nucleophilic attack on the C1' of the ribose to form the product. After dissociation, two additional enzymatic reactions on the tRNA convert PreQ1 to queuine (Q), resulting in the hypermodified nucleoside queuosine (7-(((4,5-cis-dihydroxy-2-cyclopenten-1-yl)amino)methyl)-7-deazaguanosine). This chain is Queuine tRNA-ribosyltransferase, found in Sorangium cellulosum (strain So ce56) (Polyangium cellulosum (strain So ce56)).